Here is a 370-residue protein sequence, read N- to C-terminus: DNA replication and repair protein RecF (370 aa).

30 to 37 contacts ATP; that stretch reads GENAQGKT.

Belongs to the RecF family.

It is found in the cytoplasm. The RecF protein is involved in DNA metabolism; it is required for DNA replication and normal SOS inducibility. RecF binds preferentially to single-stranded, linear DNA. It also seems to bind ATP. The protein is DNA replication and repair protein RecF of Listeria monocytogenes serotype 4b (strain CLIP80459).